The sequence spans 497 residues: Peptidoglycan endopeptidase RipA (497 aa).

An N-terminal signal peptide occupies residues 1-39 (MRRTVRALATRVHGRVCAVPLVVGMLLATALYGGGPAAA). Positions 177–192 (ARLAKEKADQAARDAE) are enriched in basic and acidic residues. Disordered stretches follow at residues 177–198 (ARLA…QDNA) and 253–297 (APAA…GQNW). A compositionally biased stretch (pro residues) spans 255–273 (AAAPAPVPNSAPAPVPGAQ). The region spanning 365–497 (REAVEYVIRR…TPYVTRLIEY (133 aa)) is the NlpC/P60 domain. Cys-408 (nucleophile) is an active-site residue. His-457 (proton acceptor) is an active-site residue. The active site involves Glu-469.

The protein belongs to the peptidase C40 family. As to quaternary structure, monomer.

It is found in the secreted. Peptidoglycan endopeptidase that cleaves the bond between D-glutamate and meso-diaminopimelate. Binds and degrades high-molecular weight peptidoglycan. Required for normal separation of daughter cells after cell division and for cell wall integrity. The sequence is that of Peptidoglycan endopeptidase RipA (ripA) from Mycolicibacterium smegmatis (strain ATCC 700084 / mc(2)155) (Mycobacterium smegmatis).